A 189-amino-acid chain; its full sequence is Cyclin-dependent kinase inhibitor 5 (189 aa).

Over residues 73–93 the composition is skewed to polar residues; the sequence is KQQKQQLIPSVNQCQTKNPRA. Positions 73–107 are disordered; that stretch reads KQQKQQLIPSVNQCQTKNPRASSGPAKKLEPDTTT.

It belongs to the CDI family. ICK/KRP subfamily. In terms of assembly, interacts with CYCD4-1. Does not interact with CDKA-1. In terms of tissue distribution, expressed in flowers and at lower levels in roots and leaves.

Its subcellular location is the nucleus. It localises to the nucleoplasm. Inhibits CYCD2-1/CDKA-1 complex kinase activity without interaction with the complex. This Arabidopsis thaliana (Mouse-ear cress) protein is Cyclin-dependent kinase inhibitor 5 (KRP5).